Here is a 227-residue protein sequence, read N- to C-terminus: Cytochrome c oxidase subunit 2 (227 aa).

Residues 1 to 14 (MAYPMQLGFQDATS) are Mitochondrial intermembrane-facing. The chain crosses the membrane as a helical span at residues 15 to 45 (PIMEELLHFHDHTLMIVLLISSLVLYIISLM). The Mitochondrial matrix segment spans residues 46-59 (LTTKLTHTSTMDAQ). The chain crosses the membrane as a helical span at residues 60–87 (EVETIWTILPAIILILIALPSLRILYMM). The Mitochondrial intermembrane portion of the chain corresponds to 88–227 (DEINNPSLTV…YFEKWSASML (140 aa)). Residues His161, Cys196, Glu198, Cys200, His204, and Met207 each contribute to the Cu cation site. Glu198 lines the Mg(2+) pocket. Tyr218 is modified (phosphotyrosine).

The protein belongs to the cytochrome c oxidase subunit 2 family. As to quaternary structure, component of the cytochrome c oxidase (complex IV, CIV), a multisubunit enzyme composed of 14 subunits. The complex is composed of a catalytic core of 3 subunits MT-CO1, MT-CO2 and MT-CO3, encoded in the mitochondrial DNA, and 11 supernumerary subunits COX4I, COX5A, COX5B, COX6A, COX6B, COX6C, COX7A, COX7B, COX7C, COX8 and NDUFA4, which are encoded in the nuclear genome. The complex exists as a monomer or a dimer and forms supercomplexes (SCs) in the inner mitochondrial membrane with NADH-ubiquinone oxidoreductase (complex I, CI) and ubiquinol-cytochrome c oxidoreductase (cytochrome b-c1 complex, complex III, CIII), resulting in different assemblies (supercomplex SCI(1)III(2)IV(1) and megacomplex MCI(2)III(2)IV(2)). Found in a complex with TMEM177, COA6, COX18, COX20, SCO1 and SCO2. Interacts with TMEM177 in a COX20-dependent manner. Interacts with COX20. Interacts with COX16. Cu cation is required as a cofactor.

Its subcellular location is the mitochondrion inner membrane. It catalyses the reaction 4 Fe(II)-[cytochrome c] + O2 + 8 H(+)(in) = 4 Fe(III)-[cytochrome c] + 2 H2O + 4 H(+)(out). Component of the cytochrome c oxidase, the last enzyme in the mitochondrial electron transport chain which drives oxidative phosphorylation. The respiratory chain contains 3 multisubunit complexes succinate dehydrogenase (complex II, CII), ubiquinol-cytochrome c oxidoreductase (cytochrome b-c1 complex, complex III, CIII) and cytochrome c oxidase (complex IV, CIV), that cooperate to transfer electrons derived from NADH and succinate to molecular oxygen, creating an electrochemical gradient over the inner membrane that drives transmembrane transport and the ATP synthase. Cytochrome c oxidase is the component of the respiratory chain that catalyzes the reduction of oxygen to water. Electrons originating from reduced cytochrome c in the intermembrane space (IMS) are transferred via the dinuclear copper A center (CU(A)) of subunit 2 and heme A of subunit 1 to the active site in subunit 1, a binuclear center (BNC) formed by heme A3 and copper B (CU(B)). The BNC reduces molecular oxygen to 2 water molecules using 4 electrons from cytochrome c in the IMS and 4 protons from the mitochondrial matrix. This chain is Cytochrome c oxidase subunit 2 (MT-CO2), found in Bubalus depressicornis (Lowland anoa).